The primary structure comprises 330 residues: Ketol-acid reductoisomerase (NADP(+)) (330 aa).

In terms of domain architecture, KARI N-terminal Rossmann spans 1–181 (MNVYYEQDAD…GGAKAGVIET (181 aa)). NADP(+) contacts are provided by residues 24–27 (YGSQ), arginine 47, serine 50, serine 52, and 82–85 (DQYQ). The active site involves histidine 107. Glycine 133 is a binding site for NADP(+). Positions 182–327 (TIKDETETDL…AKLRNMMSWL (146 aa)) constitute a KARI C-terminal knotted domain. Residues aspartate 190, glutamate 194, glutamate 226, and glutamate 230 each coordinate Mg(2+). Serine 251 contacts substrate.

It belongs to the ketol-acid reductoisomerase family. Mg(2+) is required as a cofactor.

It carries out the reaction (2R)-2,3-dihydroxy-3-methylbutanoate + NADP(+) = (2S)-2-acetolactate + NADPH + H(+). It catalyses the reaction (2R,3R)-2,3-dihydroxy-3-methylpentanoate + NADP(+) = (S)-2-ethyl-2-hydroxy-3-oxobutanoate + NADPH + H(+). Its pathway is amino-acid biosynthesis; L-isoleucine biosynthesis; L-isoleucine from 2-oxobutanoate: step 2/4. It participates in amino-acid biosynthesis; L-valine biosynthesis; L-valine from pyruvate: step 2/4. Functionally, involved in the biosynthesis of branched-chain amino acids (BCAA). Catalyzes an alkyl-migration followed by a ketol-acid reduction of (S)-2-acetolactate (S2AL) to yield (R)-2,3-dihydroxy-isovalerate. In the isomerase reaction, S2AL is rearranged via a Mg-dependent methyl migration to produce 3-hydroxy-3-methyl-2-ketobutyrate (HMKB). In the reductase reaction, this 2-ketoacid undergoes a metal-dependent reduction by NADPH to yield (R)-2,3-dihydroxy-isovalerate. The sequence is that of Ketol-acid reductoisomerase (NADP(+)) from Prosthecochloris aestuarii (strain DSM 271 / SK 413).